The chain runs to 234 residues: Small ribosomal subunit protein uS5 (234 aa).

The segment covering 1–10 has biased composition (polar residues); it reads MEDIKTTTPE. Residues 1–69 are disordered; sequence MEDIKTTTPE…KDGSGNKPNK (69 aa). The span at 11 to 31 shows a compositional bias: basic and acidic residues; the sequence is VKNEENKTSEVKEGKALEKNN. Positions 78–141 constitute an S5 DRBM domain; it reads LEEKIVGVKK…KSAKNNMYKV (64 aa).

It belongs to the universal ribosomal protein uS5 family. Part of the 30S ribosomal subunit. Contacts proteins S4 and S8.

Its function is as follows. With S4 and S12 plays an important role in translational accuracy. Functionally, located at the back of the 30S subunit body where it stabilizes the conformation of the head with respect to the body. The protein is Small ribosomal subunit protein uS5 of Malacoplasma penetrans (strain HF-2) (Mycoplasma penetrans).